The chain runs to 1096 residues: Carbamoyl phosphate synthase large chain (1096 aa).

Residues 1-402 form a carboxyphosphate synthetic domain region; sequence MPKRDDINSV…ALQKALRSLE (402 aa). Positions 129, 169, 175, 176, 208, 210, 215, 241, 242, 243, 285, and 299 each coordinate ATP. The 196-residue stretch at 133 to 328 folds into the ATP-grasp 1 domain; the sequence is KDLVIESGAD…IAKIAAKLAI (196 aa). Residues Q285, E299, and N301 each contribute to the Mg(2+) site. The Mn(2+) site is built by Q285, E299, and N301. An oligomerization domain region spans residues 403-547; the sequence is KRGSSFHWGA…YSSYDSETEI (145 aa). The carbamoyl phosphate synthetic domain stretch occupies residues 548 to 950; it reads VPSDRRKVII…AFAKSQEAAF (403 aa). The 195-residue stretch at 676 to 870 folds into the ATP-grasp 2 domain; it reads SGILDAAGLV…LAKAASLVMV (195 aa). Residues R712, R754, L756, E761, G786, I787, H788, S789, Q829, and E841 each coordinate ATP. Residues Q829, E841, and N843 each contribute to the Mg(2+) site. Residues Q829, E841, and N843 each contribute to the Mn(2+) site. The MGS-like domain maps to 951–1095; that stretch reads GGLPLSGTVF…QDYAIAREAR (145 aa). Positions 951 to 1096 are allosteric domain; it reads GGLPLSGTVF…DYAIAREARR (146 aa).

It belongs to the CarB family. As to quaternary structure, composed of two chains; the small (or glutamine) chain promotes the hydrolysis of glutamine to ammonia, which is used by the large (or ammonia) chain to synthesize carbamoyl phosphate. Tetramer of heterodimers (alpha,beta)4. It depends on Mg(2+) as a cofactor. The cofactor is Mn(2+).

It carries out the reaction hydrogencarbonate + L-glutamine + 2 ATP + H2O = carbamoyl phosphate + L-glutamate + 2 ADP + phosphate + 2 H(+). The enzyme catalyses hydrogencarbonate + NH4(+) + 2 ATP = carbamoyl phosphate + 2 ADP + phosphate + 2 H(+). It participates in amino-acid biosynthesis; L-arginine biosynthesis; carbamoyl phosphate from bicarbonate: step 1/1. Its pathway is pyrimidine metabolism; UMP biosynthesis via de novo pathway; (S)-dihydroorotate from bicarbonate: step 1/3. Large subunit of the glutamine-dependent carbamoyl phosphate synthetase (CPSase). CPSase catalyzes the formation of carbamoyl phosphate from the ammonia moiety of glutamine, carbonate, and phosphate donated by ATP, constituting the first step of 2 biosynthetic pathways, one leading to arginine and/or urea and the other to pyrimidine nucleotides. The large subunit (synthetase) binds the substrates ammonia (free or transferred from glutamine from the small subunit), hydrogencarbonate and ATP and carries out an ATP-coupled ligase reaction, activating hydrogencarbonate by forming carboxy phosphate which reacts with ammonia to form carbamoyl phosphate. In Clavibacter sepedonicus (Clavibacter michiganensis subsp. sepedonicus), this protein is Carbamoyl phosphate synthase large chain.